An 840-amino-acid polypeptide reads, in one-letter code: Probable alpha-glucuronidase A (840 aa).

The first 19 residues, 1 to 19, serve as a signal peptide directing secretion; sequence MWSGIPIFALLSSIGIAAA. Residues N50, N149, N222, N262, N279, N310, N465, N527, N576, N610, N682, N723, and N732 are each glycosylated (N-linked (GlcNAc...) asparagine).

The protein belongs to the glycosyl hydrolase 67 family.

The protein localises to the secreted. It catalyses the reaction an alpha-D-glucuronoside + H2O = D-glucuronate + an alcohol. Alpha-glucuronidase involved in the hydrolysis of xylan, a major structural heterogeneous polysaccharide found in plant biomass representing the second most abundant polysaccharide in the biosphere, after cellulose. Releases 4-O-methylglucuronic acid from xylan. This Aspergillus fumigatus (strain CBS 144.89 / FGSC A1163 / CEA10) (Neosartorya fumigata) protein is Probable alpha-glucuronidase A (aguA).